The chain runs to 202 residues: Ribosome maturation factor RimM (202 aa).

Residues 121–202 (KDEYYWVDLI…CITVDWQPDY (82 aa)) enclose the PRC barrel domain.

This sequence belongs to the RimM family. As to quaternary structure, binds ribosomal protein uS19.

The protein localises to the cytoplasm. Functionally, an accessory protein needed during the final step in the assembly of 30S ribosomal subunit, possibly for assembly of the head region. Essential for efficient processing of 16S rRNA. May be needed both before and after RbfA during the maturation of 16S rRNA. It has affinity for free ribosomal 30S subunits but not for 70S ribosomes. The protein is Ribosome maturation factor RimM of Polaromonas sp. (strain JS666 / ATCC BAA-500).